The chain runs to 179 residues: Large ribosomal subunit protein uL5 (179 aa).

It belongs to the universal ribosomal protein uL5 family. Part of the 50S ribosomal subunit; part of the 5S rRNA/L5/L18/L25 subcomplex. Contacts the 5S rRNA and the P site tRNA. Forms a bridge to the 30S subunit in the 70S ribosome.

This is one of the proteins that bind and probably mediate the attachment of the 5S RNA into the large ribosomal subunit, where it forms part of the central protuberance. In the 70S ribosome it contacts protein S13 of the 30S subunit (bridge B1b), connecting the 2 subunits; this bridge is implicated in subunit movement. Contacts the P site tRNA; the 5S rRNA and some of its associated proteins might help stabilize positioning of ribosome-bound tRNAs. The polypeptide is Large ribosomal subunit protein uL5 (Albidiferax ferrireducens (strain ATCC BAA-621 / DSM 15236 / T118) (Rhodoferax ferrireducens)).